Reading from the N-terminus, the 336-residue chain is Secreted effector protein SifA (336 aa).

Residues 1 to 330 (MPITIGNGFL…LHVRSEQQSG (330 aa)) form an interaction with host PLEKHM2 region.

The protein belongs to the Sif family. In terms of assembly, interacts with host PLEKHM2. Interacts with SseJ; the interaction is indirect.

It is found in the secreted. The protein localises to the host cytoplasm. The protein resides in the host cell membrane. Effector proteins function to alter host cell physiology and promote bacterial survival in host tissues. This protein is required for endosomal tubulation and formation of Salmonella-induced filaments (Sifs), which are filamentous structures containing lysosomal membrane glycoproteins within epithelial cells. Sif formation is concomitant with intracellular bacterial replication. This Salmonella typhimurium (strain LT2 / SGSC1412 / ATCC 700720) protein is Secreted effector protein SifA (sifA).